Reading from the N-terminus, the 64-residue chain is Large ribosomal subunit protein bL28 (64 aa).

The tract at residues 1–23 is disordered; that stretch reads MARKDQISHRGPLSGNNRSHALN.

Belongs to the bacterial ribosomal protein bL28 family.

The polypeptide is Large ribosomal subunit protein bL28 (Mesomycoplasma hyopneumoniae (strain 232) (Mycoplasma hyopneumoniae)).